The primary structure comprises 229 residues: Somatolactin (229 aa).

The N-terminal stretch at 1–24 (MHLVSVIQRGVWAVLLWPNLLASS) is a signal peptide. Cystine bridges form between C29–C39, C87–C203, and C220–C228. N-linked (GlcNAc...) asparagine glycosylation is found at N143 and N175.

The protein belongs to the somatotropin/prolactin family.

The protein localises to the secreted. The sequence is that of Somatolactin from Cyclopterus lumpus (Lumpsucker).